Consider the following 819-residue polypeptide: Pentatricopeptide repeat-containing protein At5g02860 (819 aa).

The segment at 57–93 is disordered; that stretch reads QNPNSRQPISSQTSRNRNRTRIGKSRDPNLGKPWSYH. PPR repeat units follow at residues 172–206, 207–241, 242–277, 278–312, 313–347, 348–382, 383–417, 418–452, 453–487, 488–522, 523–557, 558–592, 593–627, 628–662, 663–697, 698–732, 733–767, and 768–802; these read DNSVVAIIISMLGKEGRVSSAANMFNGLQEDGFSL, DVYSYTSLISAFANSGRYREAVNVFKKMEEDGCKP, TLITYNVILNVFGKMGTPWNKITSLVEKMKSDGIAP, DAYTYNTLITCCKRGSLHQEAAQVFEEMKAAGFSY, DKVTYNALLDVYGKSHRPKEAMKVLNEMVLNGFSP, SIVTYNSLISAYARDGMLDEAMELKNQMAEKGTKP, DVFTYTTLLSGFERAGKVESAMSIFEEMRNAGCKP, NICTFNAFIKMYGNRGKFTEMMKIFDEINVCGLSP, DIVTWNTLLAVFGQNGMDSEVSGVFKEMKRAGFVP, ERETFNTLISAYSRCGSFEQAMTVYRRMLDAGVTP, DLSTYNTVLAALARGGMWEQSEKVLAEMEDGRCKP, NELTYCSLLHAYANGKEIGLMHSLAEEVYSGVIEP, RAVLLKTLVLVCSKCDLLPEAERAFSELKERGFSP, DITTLNSMVSIYGRRQMVAKANGVLDYMKERGFTP, SMATYNSLMYMHSRSADFGKSEEILREILAKGIKP, DIISYNTVIYAYCRNTRMRDASRIFSEMRNSGIVP, DVITYNTFIGSYAADSMFEEAIGVVRYMIKHGCRP, and NQNTYNSIVDGYCKLNRKDEAKLFVEDLRNLDPHA.

Belongs to the PPR family. P subfamily.

The chain is Pentatricopeptide repeat-containing protein At5g02860 from Arabidopsis thaliana (Mouse-ear cress).